An 89-amino-acid polypeptide reads, in one-letter code: Small ribosomal subunit protein uS15 (89 aa).

The protein belongs to the universal ribosomal protein uS15 family. Part of the 30S ribosomal subunit. Forms a bridge to the 50S subunit in the 70S ribosome, contacting the 23S rRNA.

In terms of biological role, one of the primary rRNA binding proteins, it binds directly to 16S rRNA where it helps nucleate assembly of the platform of the 30S subunit by binding and bridging several RNA helices of the 16S rRNA. Forms an intersubunit bridge (bridge B4) with the 23S rRNA of the 50S subunit in the ribosome. In Parabacteroides distasonis (strain ATCC 8503 / DSM 20701 / CIP 104284 / JCM 5825 / NCTC 11152), this protein is Small ribosomal subunit protein uS15.